Reading from the N-terminus, the 628-residue chain is tRNA uridine 5-carboxymethylaminomethyl modification enzyme MnmG (628 aa).

FAD is bound by residues 11 to 16, valine 123, and serine 178; that span reads GAGHAG. 271–285 is a binding site for NAD(+); that stretch reads GPRYCPSIETKIVTF. An FAD-binding site is contributed by glutamine 368.

This sequence belongs to the MnmG family. Homodimer. Heterotetramer of two MnmE and two MnmG subunits. FAD serves as cofactor.

It localises to the cytoplasm. Its function is as follows. NAD-binding protein involved in the addition of a carboxymethylaminomethyl (cmnm) group at the wobble position (U34) of certain tRNAs, forming tRNA-cmnm(5)s(2)U34. This Bacteroides thetaiotaomicron (strain ATCC 29148 / DSM 2079 / JCM 5827 / CCUG 10774 / NCTC 10582 / VPI-5482 / E50) protein is tRNA uridine 5-carboxymethylaminomethyl modification enzyme MnmG.